The following is a 565-amino-acid chain: Anaphase-promoting complex subunit 7 (565 aa).

TPR repeat units lie at residues 101–134 (EIEV…RQRT), 169–202 (LDAI…LDWL), 203–236 (SVWI…LRDN), 237–270 (VDLL…DPYL), 339–372 (VQAL…APCR), 373–406 (LDCY…LGAN), 407–441 (AQTL…RPDY), 442–474 (IKAV…NQSD), 475–508 (CVLH…DPND), and 509–531 (QKSL…TQEE). At Lys-229 the chain carries N6-acetyllysine. Residues 513–523 (EGMQKMEKEES) are compositionally biased toward basic and acidic residues. The segment at 513–565 (EGMQKMEKEESPTDATQEEDVDDMEGSGEEGDLEGSDSEAAQWADQEQWFGMQ) is disordered. The span at 528-549 (TQEEDVDDMEGSGEEGDLEGSD) shows a compositional bias: acidic residues.

Belongs to the APC7 family. As to quaternary structure, V-shaped homodimer. The mammalian APC/C is composed at least of 14 distinct subunits ANAPC1, ANAPC2, CDC27/APC3, ANAPC4, ANAPC5, CDC16/APC6, ANAPC7, CDC23/APC8, ANAPC10, ANAPC11, CDC26/APC12, ANAPC13, ANAPC15 and ANAPC16 that assemble into a complex of at least 19 chains with a combined molecular mass of around 1.2 MDa; APC/C interacts with FZR1 and FBXO5.

The protein resides in the cytoplasm. The protein localises to the cytoskeleton. It is found in the nucleus. Its subcellular location is the spindle. The protein operates within protein modification; protein ubiquitination. Component of the anaphase promoting complex/cyclosome (APC/C), a cell cycle-regulated E3 ubiquitin ligase that controls progression through mitosis and the G1 phase of the cell cycle. The APC/C complex acts by mediating ubiquitination and subsequent degradation of target proteins: it mainly mediates the formation of 'Lys-11'-linked polyubiquitin chains and, to a lower extent, the formation of 'Lys-48'- and 'Lys-63'-linked polyubiquitin chains. The APC/C complex catalyzes assembly of branched 'Lys-11'-/'Lys-48'-linked branched ubiquitin chains on target proteins. APC7 is not required for the assembly of the APC/C complex, but has an enzyme-substrate adapter activity mediating the processive ubiquitination of specific substrates. Involved in brain development through the specific ubiquitination and clearance of MKI67 from constitutive heterochromatin after neuronal progenitors exit mitosis. This chain is Anaphase-promoting complex subunit 7, found in Homo sapiens (Human).